We begin with the raw amino-acid sequence, 119 residues long: Gibberellin-regulated protein 9 (119 aa).

The N-terminal stretch at M1 to A24 is a signal peptide.

This sequence belongs to the GASA family. In terms of processing, six disulfide bonds may be present.

Its subcellular location is the secreted. Gibberellin-regulated protein that may function in hormonal controlled steps of development such as seed germination, flowering and seed maturation. The sequence is that of Gibberellin-regulated protein 9 (GASA9) from Arabidopsis thaliana (Mouse-ear cress).